The primary structure comprises 227 residues: tRNA (guanine-N(1)-)-methyltransferase (227 aa).

S-adenosyl-L-methionine contacts are provided by residues G112 and 132-137 (LGDFVL).

The protein belongs to the RNA methyltransferase TrmD family. Homodimer.

It localises to the cytoplasm. The catalysed reaction is guanosine(37) in tRNA + S-adenosyl-L-methionine = N(1)-methylguanosine(37) in tRNA + S-adenosyl-L-homocysteine + H(+). Functionally, specifically methylates guanosine-37 in various tRNAs. This Gloeobacter violaceus (strain ATCC 29082 / PCC 7421) protein is tRNA (guanine-N(1)-)-methyltransferase.